Here is an 843-residue protein sequence, read N- to C-terminus: Tetratricopeptide repeat protein 7B (843 aa).

One copy of the TPR 1 repeat lies at 97–131 (QESNLIMAKLNYVEGDYKEALNIYARVGLDDLPLT). Phosphoserine occurs at positions 160 and 202. TPR repeat units follow at residues 219-252 (ETGL…VETR), 363-396 (SVVY…AFEE), 397-430 (FHLW…KPDD), 479-514 (TYSL…SPTD), 516-548 (QAAF…QGDD), and 549-582 (ANSL…YPEN). Phosphoserine is present on residues serine 625, serine 629, serine 630, serine 673, serine 677, serine 678, and serine 681. TPR repeat units lie at residues 696–729 (AQIW…FPMS), 730–763 (HNVL…SPTH), 765–797 (KSMQ…NSTA), and 798–831 (HEVW…EASS).

As to quaternary structure, component of a phosphatidylinositol 4-kinase (PI4K) complex, composed of PI4KA, EFR3 (EFR3A or EFR3B), TTC7 (TTC7A or TTC7B) and HYCC (HYCC1 or HYCC2). Interacts with PI4KA, interaction is direct. Interacts with EFR3 (EFR3A or EFR3B), interaction is direct. Interacts with HYCC (HYCC1 or HYCC2), interaction is direct. Association with the PI4K complex is strongly reduced by TMEM150A.

The protein localises to the cytoplasm. It is found in the cytosol. Its subcellular location is the cell membrane. Component of a complex required to localize phosphatidylinositol 4-kinase (PI4K) to the plasma membrane. The complex acts as a regulator of phosphatidylinositol 4-phosphate (PtdIns(4)P) synthesis. In the complex, plays a central role in bridging PI4KA to EFR3B and HYCC1, via direct interactions. The chain is Tetratricopeptide repeat protein 7B (TTC7B) from Homo sapiens (Human).